Consider the following 231-residue polypeptide: Translin-associated protein X homolog (231 aa).

This sequence belongs to the translin family.

Its subcellular location is the cytoplasm. It is found in the nucleus. The polypeptide is Translin-associated protein X homolog (Schizosaccharomyces pombe (strain 972 / ATCC 24843) (Fission yeast)).